A 194-amino-acid chain; its full sequence is Probable GTP-binding protein EngB (194 aa).

An EngB-type G domain is found at leucine 23–valine 194. Residues glycine 31–serine 38, glycine 57–serine 61, aspartate 75–glycine 78, threonine 143–aspartate 146, and tyrosine 173–alanine 175 each bind GTP. The Mg(2+) site is built by serine 38 and threonine 59.

Belongs to the TRAFAC class TrmE-Era-EngA-EngB-Septin-like GTPase superfamily. EngB GTPase family. Mg(2+) serves as cofactor.

In terms of biological role, necessary for normal cell division and for the maintenance of normal septation. This is Probable GTP-binding protein EngB from Thermosipho africanus (strain TCF52B).